Consider the following 429-residue polypeptide: Putative zinc metalloprotease aq_1964 (429 aa).

H17 lines the Zn(2+) pocket. The active site involves E18. Residue H21 participates in Zn(2+) binding. The chain crosses the membrane as a helical span at residues 88–110; it reads ILIALGGPLFNFLFTILVFALVY. The PDZ domain maps to 189 to 265; it reads TIKVPNVQKG…AIKLKILRNG (77 aa). A run of 2 helical transmembrane segments spans residues 369–391 and 406–428; these read IFNL…IEWL and RVGL…LRLL.

It belongs to the peptidase M50B family. Zn(2+) is required as a cofactor.

The protein resides in the cell inner membrane. This chain is Putative zinc metalloprotease aq_1964, found in Aquifex aeolicus (strain VF5).